The following is a 1361-amino-acid chain: DNA-directed RNA polymerase subunit beta (1361 aa).

This sequence belongs to the RNA polymerase beta chain family. As to quaternary structure, the RNAP catalytic core consists of 2 alpha, 1 beta, 1 beta' and 1 omega subunit. When a sigma factor is associated with the core the holoenzyme is formed, which can initiate transcription.

It carries out the reaction RNA(n) + a ribonucleoside 5'-triphosphate = RNA(n+1) + diphosphate. Functionally, DNA-dependent RNA polymerase catalyzes the transcription of DNA into RNA using the four ribonucleoside triphosphates as substrates. The protein is DNA-directed RNA polymerase subunit beta of Dichelobacter nodosus (strain VCS1703A).